A 71-amino-acid chain; its full sequence is Small ribosomal subunit protein bS18 (71 aa).

It belongs to the bacterial ribosomal protein bS18 family. Part of the 30S ribosomal subunit. Forms a tight heterodimer with protein bS6.

Binds as a heterodimer with protein bS6 to the central domain of the 16S rRNA, where it helps stabilize the platform of the 30S subunit. The polypeptide is Small ribosomal subunit protein bS18 (Nostoc sp. (strain PCC 7120 / SAG 25.82 / UTEX 2576)).